The chain runs to 202 residues: Small ribosomal subunit protein uS4c (202 aa).

An S4 RNA-binding domain is found at 90 to 159 (MRLDNIIFRL…TKNYEFSQTY (70 aa)).

It belongs to the universal ribosomal protein uS4 family. As to quaternary structure, part of the 30S ribosomal subunit. Contacts protein S5. The interaction surface between S4 and S5 is involved in control of translational fidelity.

Its subcellular location is the plastid. The protein localises to the chloroplast. One of the primary rRNA binding proteins, it binds directly to 16S rRNA where it nucleates assembly of the body of the 30S subunit. Functionally, with S5 and S12 plays an important role in translational accuracy. The protein is Small ribosomal subunit protein uS4c (rps4) of Huperzia lucidula (Shining clubmoss).